The chain runs to 556 residues: 2-succinyl-5-enolpyruvyl-6-hydroxy-3-cyclohexene-1-carboxylate synthase (556 aa).

The protein belongs to the TPP enzyme family. MenD subfamily. Homodimer. Requires Mg(2+) as cofactor. Mn(2+) serves as cofactor. It depends on thiamine diphosphate as a cofactor.

The catalysed reaction is isochorismate + 2-oxoglutarate + H(+) = 5-enolpyruvoyl-6-hydroxy-2-succinyl-cyclohex-3-ene-1-carboxylate + CO2. Its pathway is quinol/quinone metabolism; 1,4-dihydroxy-2-naphthoate biosynthesis; 1,4-dihydroxy-2-naphthoate from chorismate: step 2/7. The protein operates within quinol/quinone metabolism; menaquinone biosynthesis. Its function is as follows. Catalyzes the thiamine diphosphate-dependent decarboxylation of 2-oxoglutarate and the subsequent addition of the resulting succinic semialdehyde-thiamine pyrophosphate anion to isochorismate to yield 2-succinyl-5-enolpyruvyl-6-hydroxy-3-cyclohexene-1-carboxylate (SEPHCHC). This chain is 2-succinyl-5-enolpyruvyl-6-hydroxy-3-cyclohexene-1-carboxylate synthase, found in Salmonella paratyphi A (strain AKU_12601).